Reading from the N-terminus, the 86-residue chain is Kappa-theraphotoxin-Cg1a 2 (86 aa).

The N-terminal stretch at 1-21 is a signal peptide; the sequence is MKVSVVITLAVLGVMFVWASA. Positions 22 to 50 are excised as a propeptide; the sequence is AELEERGSDQRDSPAWLKSMERIFQSEER. Disulfide bonds link cysteine 52–cysteine 66, cysteine 59–cysteine 71, and cysteine 65–cysteine 78. The residue at position 84 (phenylalanine 84) is a Phenylalanine amide.

It belongs to the neurotoxin 10 (Hwtx-1) family. 28 (Jztx-11) subfamily. Expressed by the venom gland.

Its subcellular location is the secreted. This toxin acts as a voltage-dependent gating-modifier. It inhibits the sodium conductance (IC(50)=124 nM) and slows the fast inactivation (EC(50)=1180 nM) of Nav1.5/SCN5A. It significantly shifts the activation to more depolarized voltages and decreases the deactivation of Nav1.5 currents upon extreme depolarization, but only slightly affects voltage-dependence of steady-state inactivation. In addition, this toxin causes an approximately five-fold decrease in the rate of recovery from inactivation and an approximately 1.9-fold reduction in the closed-state inactivation rate. This toxin integrates the functions of site 3 toxins (alpha-scorpion toxins) with site 4 toxins (beta-scorpion and spider toxins) by targeting multiple sites on Nav1.5. Also shows inhibition of voltage-gated potassium channels (5 uM completely inhibits Kv2.1/KCNB1, whereas 5 uM moderately inhibits Kv4.2/KCND2 Kv4.1/KCND1 channels). The protein is Kappa-theraphotoxin-Cg1a 2 of Chilobrachys guangxiensis (Chinese earth tiger tarantula).